We begin with the raw amino-acid sequence, 284 residues long: Hypoxanthine-guanine phosphoribosyltransferase (284 aa).

GMP-binding positions include K129, 194–202 (EDIIDTGKT), K226, and D253. D198 functions as the Proton acceptor in the catalytic mechanism. D253 serves as a coordination point for Mg(2+).

The protein belongs to the purine/pyrimidine phosphoribosyltransferase family. As to quaternary structure, homotetramer. Requires Mg(2+) as cofactor.

Its subcellular location is the cytoplasm. It carries out the reaction IMP + diphosphate = hypoxanthine + 5-phospho-alpha-D-ribose 1-diphosphate. The enzyme catalyses GMP + diphosphate = guanine + 5-phospho-alpha-D-ribose 1-diphosphate. Its pathway is purine metabolism; IMP biosynthesis via salvage pathway; IMP from hypoxanthine: step 1/1. In terms of biological role, converts guanine to guanosine monophosphate, and hypoxanthine to inosine monophosphate. Transfers the 5-phosphoribosyl group from 5-phosphoribosylpyrophosphate onto the purine. Plays a central role in the generation of purine nucleotides through the purine salvage pathway. This is Hypoxanthine-guanine phosphoribosyltransferase (HGPRT) from Schistosoma mansoni (Blood fluke).